Consider the following 1441-residue polypeptide: ABC transporter G family member 51 (1441 aa).

The tract at residues 52–71 (VLPDPDGLGGGDGGGRGEGQ) is disordered. Positions 58–69 (GLGGGDGGGRGE) are enriched in gly residues. The 275-residue stretch at 154 to 428 (LISSHLLRPD…FKSLGFSLPP (275 aa)) folds into the ABC transporter 1 domain. 187–194 (GPPASGKS) serves as a coordination point for ATP. The ABC transmembrane type-2 1 domain occupies 505–718 (SLVRACFARE…AQRAVSVNEF (214 aa)). 6 helical membrane-spanning segments follow: residues 523–543 (FLYT…STLF), 558–578 (LYLA…FTEM), 615–635 (FIEA…APTV), 642–662 (MLLL…MGAI), 668–688 (IAST…GFVV), and 751–771 (FWIG…MFTL). In terms of domain architecture, ABC transporter 2 spans 838 to 1090 (MTFHNVNYYV…DMINYFQGIP (253 aa)). 883–890 (GASGSGKT) serves as a coordination point for ATP. An ABC transmembrane type-2 2 domain is found at 1163 to 1380 (TQFMVCLRKQ…TLRGVITSQL (218 aa)). 7 consecutive transmembrane segments (helical) span residues 1184-1204 (VVRL…FWNV), 1214-1234 (ILLL…NNAS), 1271-1291 (VEIP…YFMV), 1300-1320 (LVLY…YGMV), 1330-1350 (MASV…GFLI), 1355-1375 (IPGW…LRGV), and 1413-1433 (ATVA…AISI).

The protein belongs to the ABC transporter superfamily. ABCG family. PDR (TC 3.A.1.205) subfamily.

The protein localises to the membrane. Its function is as follows. May be a general defense protein. The protein is ABC transporter G family member 51 of Oryza sativa subsp. japonica (Rice).